An 825-amino-acid polypeptide reads, in one-letter code: Probable phosphoketolase (825 aa).

The protein belongs to the XFP family. Requires thiamine diphosphate as cofactor.

The polypeptide is Probable phosphoketolase (Bifidobacterium animalis subsp. lactis (strain AD011)).